Consider the following 227-residue polypeptide: UPF0173 metal-dependent hydrolase SSO0099 (227 aa).

This sequence belongs to the UPF0173 family.

The chain is UPF0173 metal-dependent hydrolase SSO0099 from Saccharolobus solfataricus (strain ATCC 35092 / DSM 1617 / JCM 11322 / P2) (Sulfolobus solfataricus).